Reading from the N-terminus, the 88-residue chain is uncharacterized protein (88 aa).

This is an uncharacterized protein from Mycobacterium tuberculosis (strain CDC 1551 / Oshkosh).